Reading from the N-terminus, the 305-residue chain is MTDHIAAVKTYLLDLQDRICAALEAEDGKARFAEDAWERPAGGGGRTRVIGDGALIEKGGVNFSHVFGDSLPPSASAHRPELAGRGFQALGVSLVIHPENPHVPTSHANVRFFCAEKEGEEPVWWFGGGFDLTPYYAHEEDCVHWHRVARDACAPFGADVYPRYKEWCDRYFHLKHRNEPRGIGGLFFDDLNQWDFDTCFAFIRAIGDAYIDAYLPIVQRRKHTPFDERQREFQAYRRGRYVEFNLVFDRGTLFGLQSGGRTESILMSLPPQVRWGYDWKPEPGSEEARLTEYFLADRDWLAGQP.

S93 contributes to the substrate binding site. Positions 97 and 107 each coordinate a divalent metal cation. Catalysis depends on H107, which acts as the Proton donor. 109–111 provides a ligand contact to substrate; that stretch reads NVR. Residues H146 and H176 each contribute to the a divalent metal cation site. The interval 241-276 is important for dimerization; it reads YVEFNLVFDRGTLFGLQSGGRTESILMSLPPQVRWG. Residue 259–261 coordinates substrate; that stretch reads GGR.

This sequence belongs to the aerobic coproporphyrinogen-III oxidase family. Homodimer. It depends on a divalent metal cation as a cofactor.

The protein resides in the cytoplasm. It catalyses the reaction coproporphyrinogen III + O2 + 2 H(+) = protoporphyrinogen IX + 2 CO2 + 2 H2O. It functions in the pathway porphyrin-containing compound metabolism; protoporphyrin-IX biosynthesis; protoporphyrinogen-IX from coproporphyrinogen-III (O2 route): step 1/1. Functionally, involved in the heme biosynthesis. Catalyzes the aerobic oxidative decarboxylation of propionate groups of rings A and B of coproporphyrinogen-III to yield the vinyl groups in protoporphyrinogen-IX. The polypeptide is Oxygen-dependent coproporphyrinogen-III oxidase (Pseudomonas aeruginosa (strain LESB58)).